The chain runs to 1577 residues: Pentafunctional AROM polypeptide (1577 aa).

The tract at residues 1-392 is 3-dehydroquinate synthase; it reads MASVGLEKVN…YGTSAHVVSD (392 aa). NAD(+)-binding positions include 80–83, 111–113, and Asp-116; these read ETYK and GGV. Arg-127 is a binding site for 7-phospho-2-dehydro-3-deoxy-D-arabino-heptonate. 136–137 contacts NAD(+); sequence TS. Positions 143 and 149 each coordinate 7-phospho-2-dehydro-3-deoxy-D-arabino-heptonate. Lys-158 lines the NAD(+) pocket. Asn-159 contacts 7-phospho-2-dehydro-3-deoxy-D-arabino-heptonate. NAD(+) is bound by residues 176-179 and Asn-187; that span reads WLET. Residue Glu-191 coordinates Zn(2+). Residues 191–194 and Lys-258 contribute to the 7-phospho-2-dehydro-3-deoxy-D-arabino-heptonate site; that span reads EVIK. Glu-268 acts as the Proton acceptor; for 3-dehydroquinate synthase activity in catalysis. Residues 272–276 and His-279 each bind 7-phospho-2-dehydro-3-deoxy-D-arabino-heptonate; that span reads RNLLN. His-279 is a Zn(2+) binding site. Residue His-283 is the Proton acceptor; for 3-dehydroquinate synthase activity of the active site. 7-phospho-2-dehydro-3-deoxy-D-arabino-heptonate-binding residues include His-295 and Lys-364. His-295 contacts Zn(2+). Positions 405-863 are EPSP synthase; it reads VYPFTDVRSS…WDVLHSRLGA (459 aa). The active-site For EPSP synthase activity is Cys-845. Positions 882 to 1071 are shikimate kinase; that stretch reads VVLIGMRAAG…VPVKRSTFVC (190 aa). Residue 886–893 coordinates ATP; the sequence is GMRAAGKS. Residues 1072-1284 are 3-dehydroquinase; that stretch reads LTFQNLLPEM…AAPGQLTLRQ (213 aa). His-1189 (proton acceptor; for 3-dehydroquinate dehydratase activity) is an active-site residue. Lys-1218 (schiff-base intermediate with substrate; for 3-dehydroquinate dehydratase activity) is an active-site residue. Positions 1297-1577 are shikimate dehydrogenase; sequence PKKMFVVGSP…APVYDAVTQE (281 aa).

This sequence in the N-terminal section; belongs to the sugar phosphate cyclases superfamily. Dehydroquinate synthase family. The protein in the 2nd section; belongs to the EPSP synthase family. It in the 3rd section; belongs to the shikimate kinase family. In the 4th section; belongs to the type-I 3-dehydroquinase family. This sequence in the C-terminal section; belongs to the shikimate dehydrogenase family. As to quaternary structure, homodimer. Requires Zn(2+) as cofactor.

The protein resides in the cytoplasm. It catalyses the reaction 7-phospho-2-dehydro-3-deoxy-D-arabino-heptonate = 3-dehydroquinate + phosphate. It carries out the reaction 3-dehydroquinate = 3-dehydroshikimate + H2O. The catalysed reaction is shikimate + NADP(+) = 3-dehydroshikimate + NADPH + H(+). The enzyme catalyses shikimate + ATP = 3-phosphoshikimate + ADP + H(+). It catalyses the reaction 3-phosphoshikimate + phosphoenolpyruvate = 5-O-(1-carboxyvinyl)-3-phosphoshikimate + phosphate. Its pathway is metabolic intermediate biosynthesis; chorismate biosynthesis; chorismate from D-erythrose 4-phosphate and phosphoenolpyruvate: step 2/7. It participates in metabolic intermediate biosynthesis; chorismate biosynthesis; chorismate from D-erythrose 4-phosphate and phosphoenolpyruvate: step 3/7. The protein operates within metabolic intermediate biosynthesis; chorismate biosynthesis; chorismate from D-erythrose 4-phosphate and phosphoenolpyruvate: step 4/7. It functions in the pathway metabolic intermediate biosynthesis; chorismate biosynthesis; chorismate from D-erythrose 4-phosphate and phosphoenolpyruvate: step 5/7. Its pathway is metabolic intermediate biosynthesis; chorismate biosynthesis; chorismate from D-erythrose 4-phosphate and phosphoenolpyruvate: step 6/7. In terms of biological role, the AROM polypeptide catalyzes 5 consecutive enzymatic reactions in prechorismate polyaromatic amino acid biosynthesis. This Eremothecium gossypii (strain ATCC 10895 / CBS 109.51 / FGSC 9923 / NRRL Y-1056) (Yeast) protein is Pentafunctional AROM polypeptide.